Reading from the N-terminus, the 305-residue chain is Aspartate carbamoyltransferase catalytic subunit (305 aa).

Carbamoyl phosphate contacts are provided by Arg56 and Thr57. Lys84 is a binding site for L-aspartate. Residues Arg106, His136, and Gln139 each coordinate carbamoyl phosphate. L-aspartate is bound by residues Arg169 and Arg221. Positions 262 and 263 each coordinate carbamoyl phosphate.

It belongs to the aspartate/ornithine carbamoyltransferase superfamily. ATCase family. Heterododecamer (2C3:3R2) of six catalytic PyrB chains organized as two trimers (C3), and six regulatory PyrI chains organized as three dimers (R2).

It catalyses the reaction carbamoyl phosphate + L-aspartate = N-carbamoyl-L-aspartate + phosphate + H(+). Its pathway is pyrimidine metabolism; UMP biosynthesis via de novo pathway; (S)-dihydroorotate from bicarbonate: step 2/3. Its function is as follows. Catalyzes the condensation of carbamoyl phosphate and aspartate to form carbamoyl aspartate and inorganic phosphate, the committed step in the de novo pyrimidine nucleotide biosynthesis pathway. The sequence is that of Aspartate carbamoyltransferase catalytic subunit from Streptococcus sanguinis (strain SK36).